Reading from the N-terminus, the 186-residue chain is Peptide deformylase (186 aa).

Positions 113 and 157 each coordinate Fe cation. Glu-158 is a catalytic residue. A Fe cation-binding site is contributed by His-161.

This sequence belongs to the polypeptide deformylase family. It depends on Fe(2+) as a cofactor.

The catalysed reaction is N-terminal N-formyl-L-methionyl-[peptide] + H2O = N-terminal L-methionyl-[peptide] + formate. Removes the formyl group from the N-terminal Met of newly synthesized proteins. Requires at least a dipeptide for an efficient rate of reaction. N-terminal L-methionine is a prerequisite for activity but the enzyme has broad specificity at other positions. This Malacoplasma penetrans (strain HF-2) (Mycoplasma penetrans) protein is Peptide deformylase.